Here is a 148-residue protein sequence, read N- to C-terminus: MADQHFQQPLHFQGSYGQQQPRSYQVAKAATAVTAGGSLLVLSGLVLAGTVIALTIATPLLVIFSPVLVPALITVALITMGFLTSGGFGVAAVTVLSWIYKYVTGKQPPGADQLDQARHKLAGKARDIKDRAEQFGQQHVPSGQQQSS.

Ala-2 carries the N-acetylalanine modification. The interval 2 to 28 (ADQHFQQPLHFQGSYGQQQPRSYQVAK) is polar. Residues 29–148 (AATAVTAGGS…HVPSGQQQSS (120 aa)) are hydrophobic. 2 helical membrane-spanning segments follow: residues 37–57 (GSLL…LTIA) and 81–101 (GFLT…WIYK).

Belongs to the oleosin family.

It localises to the lipid droplet. It is found in the membrane. Its function is as follows. May have a structural role to stabilize the lipid body during desiccation of the seed by preventing coalescence of the oil. Probably interacts with both lipid and phospholipid moieties of lipid bodies. May also provide recognition signals for specific lipase anchorage in lipolysis during seedling growth. The protein is Oleosin 1 (OLE1) of Prunus dulcis (Almond).